We begin with the raw amino-acid sequence, 362 residues long: MGNTFGHLFRVTTFGESHGGGVGVVIDGCPPLLEISQAEIQAELDRRRPGQSRITTPRQETDTCEILSGVFEGKTLGTPIAILVRNKDTRPQDYQEMAQVYRPSHADATYDAKYGIRNWQGGGRSSARETIGRVAAGAIAKKILQQVAGVEIIAYVRRIKDLEAPIDPNTVTMEQVESNIVRCPHPDYAEKMIALIDQVRRDANSIGGVVECVARNVPKGLGSPVFDKLEADLAKGVMSLPATKGFEIGSGFAGTLLTGQEHNDEFYSENGDIRTVTNRSGGVQGGISNGENIIIRAAFKPTATIGQAQRTVNQAGESTILAAKGRHDPCVLPRAVPMVEAMVALVLCDHLLRDRAQCHLLT.

NADP(+) contacts are provided by arginine 47 and arginine 53. FMN-binding positions include arginine 124 to serine 126, glycine 285, lysine 300 to threonine 304, and arginine 326.

The protein belongs to the chorismate synthase family. In terms of assembly, homotetramer. FMNH2 serves as cofactor.

The catalysed reaction is 5-O-(1-carboxyvinyl)-3-phosphoshikimate = chorismate + phosphate. It functions in the pathway metabolic intermediate biosynthesis; chorismate biosynthesis; chorismate from D-erythrose 4-phosphate and phosphoenolpyruvate: step 7/7. Its function is as follows. Catalyzes the anti-1,4-elimination of the C-3 phosphate and the C-6 proR hydrogen from 5-enolpyruvylshikimate-3-phosphate (EPSP) to yield chorismate, which is the branch point compound that serves as the starting substrate for the three terminal pathways of aromatic amino acid biosynthesis. This reaction introduces a second double bond into the aromatic ring system. This chain is Chorismate synthase, found in Cyanothece sp. (strain PCC 7425 / ATCC 29141).